Here is a 258-residue protein sequence, read N- to C-terminus: Acetylglutamate kinase (258 aa).

Residues 41–42 (GG), Arg63, and Asn156 each bind substrate.

It belongs to the acetylglutamate kinase family. ArgB subfamily.

Its subcellular location is the cytoplasm. It catalyses the reaction N-acetyl-L-glutamate + ATP = N-acetyl-L-glutamyl 5-phosphate + ADP. It participates in amino-acid biosynthesis; L-arginine biosynthesis; N(2)-acetyl-L-ornithine from L-glutamate: step 2/4. Catalyzes the ATP-dependent phosphorylation of N-acetyl-L-glutamate. This is Acetylglutamate kinase from Bacillus pumilus (strain SAFR-032).